The sequence spans 255 residues: tRNA (guanine-N(1)-)-methyltransferase (255 aa).

S-adenosyl-L-methionine is bound by residues Gly113 and 133–138; that span reads IGDYVL.

The protein belongs to the RNA methyltransferase TrmD family. In terms of assembly, homodimer.

It is found in the cytoplasm. The enzyme catalyses guanosine(37) in tRNA + S-adenosyl-L-methionine = N(1)-methylguanosine(37) in tRNA + S-adenosyl-L-homocysteine + H(+). In terms of biological role, specifically methylates guanosine-37 in various tRNAs. The chain is tRNA (guanine-N(1)-)-methyltransferase from Shigella flexneri serotype 5b (strain 8401).